Reading from the N-terminus, the 294-residue chain is MAITAQMVKELREKTGAGMMDCKKALTETNGDMEKAIDWLREKGIAKAAKKADRIAAEGMTYIATEGNAAVILEVNSETDFVAKNEAFQTLVKELAAHLLKQKPATLDEALGQTMSSGSTVQDYINEAVAKIGEKITLRRFAVVNKADDETFGAYLHMGGRIGVLTLLAGSATEEVAKDVAMHIAALHPKYVSRDEVPQEEIAREREVLKQQALNEGKPENIVEKMVEGRLKKFYEDVCLLEQAFVKNPDVTVRQYVESSGATVKQFIRYEVGEGLEKRQDNFAEEVMSQVRKQ.

The interval Thr-79–Val-82 is involved in Mg(2+) ion dislocation from EF-Tu.

It belongs to the EF-Ts family.

It localises to the cytoplasm. In terms of biological role, associates with the EF-Tu.GDP complex and induces the exchange of GDP to GTP. It remains bound to the aminoacyl-tRNA.EF-Tu.GTP complex up to the GTP hydrolysis stage on the ribosome. This Geobacillus thermodenitrificans (strain NG80-2) protein is Elongation factor Ts.